Here is a 744-residue protein sequence, read N- to C-terminus: Leukocyte immunoglobulin-like receptor subfamily B member 3A (744 aa).

Positions 1-24 are cleaved as a signal peptide; that stretch reads MTFTFTALLCLGLTLGLWIPVLTG. Residues 25 to 543 are Extracellular-facing; it reads SLPKPILRVQ…PPDGLQRYLK (519 aa). 5 consecutive Ig-like C2-type domains span residues 26-119, 121-221, 223-316, 320-419, and 426-520; these read LPKP…VVTG, YSKP…LVSG, LQKP…VVTG, YHPL…LITG, and FLSV…IVSG. Intrachain disulfides connect Cys-49–Cys-98, Cys-144–Cys-197, and Cys-246–Cys-295. The N-linked (GlcNAc...) asparagine glycan is linked to Asn-79. Residue Asn-338 is glycosylated (N-linked (GlcNAc...) asparagine). A disulfide bond links Cys-343 and Cys-395. Residue Asn-440 is glycosylated (N-linked (GlcNAc...) asparagine). The cysteines at positions 445 and 496 are disulfide-linked. The chain crosses the membrane as a helical span at residues 544-564; it reads ALIGVSVAFLLFLFILIFILL. Residues 565–744 lie on the Cytoplasmic side of the membrane; sequence RRRHQEKFRK…PGAVPKNKKQ (180 aa). The span at 572–584 shows a compositional bias: basic and acidic residues; that stretch reads FRKDDEDAQKGKE. Disordered regions lie at residues 572–617, 630–652, and 667–744; these read FRKD…ESLY, ELDT…VEPS, and EQLN…NKKQ. The ITIM motif 1 signature appears at 615-620; sequence SLYASV. 2 short sequence motifs (ITIM motif) span residues 695 to 700 and 725 to 730; these read VTYAQL and SVYAAL. Residues Tyr-697 and Tyr-727 each carry the phosphotyrosine; by LYN modification.

Interacts with LYN, PTPN6/SHP-1 and PTPN11/SHP-2. In terms of processing, phosphorylated on tyrosine residues by LYN. Phosphorylation at Tyr-697 and Tyr-727 is important for interaction with PTPN6/SHP-1 and PTPN11/SHP-2.

Its subcellular location is the cell membrane. Its function is as follows. May act as receptor for class I MHC antigens. Becomes activated upon coligation with immune receptors, such as FCGR2B and the B-cell receptor. Down-regulates antigen-induced B-cell activation by recruiting phosphatases to its immunoreceptor tyrosine-based inhibitor motifs (ITIM). In Rattus norvegicus (Rat), this protein is Leukocyte immunoglobulin-like receptor subfamily B member 3A.